We begin with the raw amino-acid sequence, 1183 residues long: 3-hydroxy-3-methylglutaryl-coenzyme A reductase (1183 aa).

The Cytoplasmic segment spans residues 1 to 245 (MAAILLPQRF…DLLKNAETLD (245 aa)). One can recognise an SSD domain in the interval 245–426 (DIVIMLLGYI…FTFYTAILSI (182 aa)). A helical membrane pass occupies residues 246–266 (IVIMLLGYIAMHLTFVSLFLS). Topologically, residues 267 to 273 (MRKMGSK) are lumenal. Residues 274-294 (FWLGICTLFSSVFAFLFGLVV) traverse the membrane as a helical segment. Over 295-299 (TTKLG) the chain is Cytoplasmic. A helical membrane pass occupies residues 300-320 (VPISVILLSEGLPFLVVTIGF). Topologically, residues 321–378 (EKNIVLTRAVMSHAIEHRRIQAQNSKSGKRSPERSTQNMIQYAVQAAIKEKGFEIIRD) are lumenal. The chain crosses the membrane as a helical span at residues 379 to 399 (YAIEIVILVIGAASGVQGGLQ). Over 400 to 402 (QFC) the chain is Cytoplasmic. A helical transmembrane segment spans residues 403–423 (FLAAWTLFFDFILLFTFYTAI). Residues 424-482 (LSIKLEINRIKRHVDMRMALEDDGVSRRVAENVAKGDDELNRVRGDAPLFGRKSSSIPK) are Lumenal-facing. Residues 483–503 (FKVLMILGFIFVNIVNICSIP) traverse the membrane as a helical segment. The Cytoplasmic segment spans residues 504-1183 (FRNPSSMSTI…SAAAIQRSKR (680 aa)). The Charge relay system role is filled by Glu-828. 834 to 840 (SASRGCK) is a binding site for CoA. NADP(+)-binding positions include 895 to 897 (SRF) and 922 to 930 (DAMGMNMIS). The Charge relay system role is filled by Lys-962. A CoA-binding site is contributed by 991-993 (VLK). The Charge relay system role is filled by Asp-1038. CoA is bound at residue 1133–1134 (AH). His-1134 serves as the catalytic Proton donor. The segment at 1136–1183 (QHNRSAAPSRSTTPAPPMTPVSLAMTSAQERSASTTSMSAAAIQRSKR) is disordered. 1138–1139 (NR) contacts NADP(+). Low complexity-rich tracts occupy residues 1139 to 1148 (RSAAPSRSTT) and 1167 to 1177 (SASTTSMSAAA).

Belongs to the HMG-CoA reductase family.

The protein resides in the endoplasmic reticulum membrane. The catalysed reaction is (R)-mevalonate + 2 NADP(+) + CoA = (3S)-3-hydroxy-3-methylglutaryl-CoA + 2 NADPH + 2 H(+). It functions in the pathway metabolic intermediate biosynthesis; (R)-mevalonate biosynthesis; (R)-mevalonate from acetyl-CoA: step 3/3. Its function is as follows. HMG-CoA reductase; part of the first module of ergosterol biosynthesis pathway that includes the early steps of the pathway, conserved across all eukaryotes, and which results in the formation of mevalonate from acetyl-coenzyme A (acetyl-CoA). In this module, the cytosolic acetyl-CoA acetyltransferase catalyzes the formation of acetoacetyl-CoA. The hydroxymethylglutaryl-CoA synthase then condenses acetyl-CoA with acetoacetyl-CoA to form HMG-CoA. The rate-limiting step of the early module is the reduction to mevalonate by the 3-hydroxy-3-methylglutaryl-coenzyme A (HMG-CoA) reductase HMGR. This is 3-hydroxy-3-methylglutaryl-coenzyme A reductase (HMGR) from Gibberella fujikuroi (strain CBS 195.34 / IMI 58289 / NRRL A-6831) (Bakanae and foot rot disease fungus).